The chain runs to 381 residues: 1-deoxy-D-xylulose 5-phosphate reductoisomerase (381 aa).

NADPH-binding residues include T10, G11, S12, I13, G36, K37, N38, and N122. K123 provides a ligand contact to 1-deoxy-D-xylulose 5-phosphate. E124 contacts NADPH. D148 serves as a coordination point for Mn(2+). S149, E150, S173, and H196 together coordinate 1-deoxy-D-xylulose 5-phosphate. Residue E150 coordinates Mn(2+). G202 lines the NADPH pocket. 4 residues coordinate 1-deoxy-D-xylulose 5-phosphate: S209, N214, K215, and E218. Position 218 (E218) interacts with Mn(2+).

Belongs to the DXR family. It depends on Mg(2+) as a cofactor. The cofactor is Mn(2+).

The catalysed reaction is 2-C-methyl-D-erythritol 4-phosphate + NADP(+) = 1-deoxy-D-xylulose 5-phosphate + NADPH + H(+). Its pathway is isoprenoid biosynthesis; isopentenyl diphosphate biosynthesis via DXP pathway; isopentenyl diphosphate from 1-deoxy-D-xylulose 5-phosphate: step 1/6. Catalyzes the NADPH-dependent rearrangement and reduction of 1-deoxy-D-xylulose-5-phosphate (DXP) to 2-C-methyl-D-erythritol 4-phosphate (MEP). The chain is 1-deoxy-D-xylulose 5-phosphate reductoisomerase from Desulfitobacterium hafniense (strain Y51).